Here is a 314-residue protein sequence, read N- to C-terminus: uncharacterized protein (314 aa).

2 consecutive transmembrane segments (helical) span residues 23-43 (LALGPVHPGGPTLIDLLMALF) and 98-118 (MASGIGGALSGALGGVMGPLT). Residues 165–184 (GLGSGAGGGDVGGGGAGGTT) are compositionally biased toward gly residues. A disordered region spans residues 165–314 (GLGSGAGGGD…APDEKTDAGE (150 aa)). Positions 190 to 202 (GPPPVPTSSPPTT) are enriched in pro residues. 2 stretches are compositionally biased toward low complexity: residues 203-212 (PAGAPTKSAT) and 219-232 (ASPASAHMGAAGMP). A helical transmembrane segment spans residues 221–241 (PASAHMGAAGMPMVPPGAMGA). Residues 294 to 314 (LLPEHKDFGRIAPDEKTDAGE) show a composition bias toward basic and acidic residues.

It localises to the cell membrane. This is an uncharacterized protein from Mycobacterium tuberculosis (strain ATCC 25618 / H37Rv).